Here is a 556-residue protein sequence, read N- to C-terminus: Urocanate hydratase (556 aa).

NAD(+)-binding positions include 52 to 53, Gln-130, 176 to 178, Glu-196, Arg-201, 242 to 243, 263 to 267, 273 to 274, and Tyr-322; these read GG, GMG, NA, QTSAH, and YL. Cys-410 is an active-site residue. Gly-492 contributes to the NAD(+) binding site.

It belongs to the urocanase family. Requires NAD(+) as cofactor.

The protein resides in the cytoplasm. The enzyme catalyses 4-imidazolone-5-propanoate = trans-urocanate + H2O. Its pathway is amino-acid degradation; L-histidine degradation into L-glutamate; N-formimidoyl-L-glutamate from L-histidine: step 2/3. Its function is as follows. Catalyzes the conversion of urocanate to 4-imidazolone-5-propionate. The polypeptide is Urocanate hydratase (Shewanella oneidensis (strain ATCC 700550 / JCM 31522 / CIP 106686 / LMG 19005 / NCIMB 14063 / MR-1)).